The sequence spans 985 residues: Bifunctional glutamine synthetase adenylyltransferase/adenylyl-removing enzyme (985 aa).

The adenylyl removase stretch occupies residues 1–472; the sequence is MTSSAPGNAD…HYARLFEGDP (472 aa). The tract at residues 477-985 is adenylyl transferase; the sequence is SLPPVNYGAG…RRVFTSLLEE (509 aa).

The protein belongs to the GlnE family. Mg(2+) is required as a cofactor.

The catalysed reaction is [glutamine synthetase]-O(4)-(5'-adenylyl)-L-tyrosine + phosphate = [glutamine synthetase]-L-tyrosine + ADP. It catalyses the reaction [glutamine synthetase]-L-tyrosine + ATP = [glutamine synthetase]-O(4)-(5'-adenylyl)-L-tyrosine + diphosphate. Functionally, involved in the regulation of glutamine synthetase GlnA, a key enzyme in the process to assimilate ammonia. When cellular nitrogen levels are high, the C-terminal adenylyl transferase (AT) inactivates GlnA by covalent transfer of an adenylyl group from ATP to specific tyrosine residue of GlnA, thus reducing its activity. Conversely, when nitrogen levels are low, the N-terminal adenylyl removase (AR) activates GlnA by removing the adenylyl group by phosphorolysis, increasing its activity. The regulatory region of GlnE binds the signal transduction protein PII (GlnB) which indicates the nitrogen status of the cell. This Bradyrhizobium sp. (strain BTAi1 / ATCC BAA-1182) protein is Bifunctional glutamine synthetase adenylyltransferase/adenylyl-removing enzyme.